The chain runs to 329 residues: Biotin synthase (329 aa).

The Radical SAM core domain maps to phenylalanine 46–serine 275. [4Fe-4S] cluster contacts are provided by cysteine 64, cysteine 68, and cysteine 71. Residues cysteine 108, cysteine 140, cysteine 200, and arginine 273 each coordinate [2Fe-2S] cluster.

This sequence belongs to the radical SAM superfamily. Biotin synthase family. As to quaternary structure, homodimer. [4Fe-4S] cluster is required as a cofactor. It depends on [2Fe-2S] cluster as a cofactor.

It carries out the reaction (4R,5S)-dethiobiotin + (sulfur carrier)-SH + 2 reduced [2Fe-2S]-[ferredoxin] + 2 S-adenosyl-L-methionine = (sulfur carrier)-H + biotin + 2 5'-deoxyadenosine + 2 L-methionine + 2 oxidized [2Fe-2S]-[ferredoxin]. It functions in the pathway cofactor biosynthesis; biotin biosynthesis; biotin from 7,8-diaminononanoate: step 2/2. Its function is as follows. Catalyzes the conversion of dethiobiotin (DTB) to biotin by the insertion of a sulfur atom into dethiobiotin via a radical-based mechanism. In Thermus thermophilus (strain ATCC BAA-163 / DSM 7039 / HB27), this protein is Biotin synthase.